A 117-amino-acid chain; its full sequence is MDYFLIGIGGACGSIVRYKIGDIISKRTKSKFPWGTFIINITGAFLLGIITKSGAGKNLSMILADGFLGAYTTFSTFMYEGFNLFENKKKLNALIYILSSIIIGILGFYMGEFISQL.

Transmembrane regions (helical) follow at residues 4 to 24 (FLIG…GDII), 31 to 51 (KFPW…GIIT), 59 to 79 (LSMI…TFMY), and 94 to 114 (LIYI…GEFI). Na(+) contacts are provided by Gly69 and Thr72.

This sequence belongs to the fluoride channel Fluc/FEX (TC 1.A.43) family.

The protein resides in the cell membrane. It catalyses the reaction fluoride(in) = fluoride(out). With respect to regulation, na(+) is not transported, but it plays an essential structural role and its presence is essential for fluoride channel function. In terms of biological role, fluoride-specific ion channel. Important for reducing fluoride concentration in the cell, thus reducing its toxicity. The sequence is that of Fluoride-specific ion channel FluC 2 from Clostridium acetobutylicum (strain ATCC 824 / DSM 792 / JCM 1419 / IAM 19013 / LMG 5710 / NBRC 13948 / NRRL B-527 / VKM B-1787 / 2291 / W).